A 365-amino-acid chain; its full sequence is Forkhead box protein E4 (365 aa).

Basic and acidic residues predominate over residues M1–S13. Residues M1–R46 form a disordered region. A DNA-binding region (fork-head) is located at residues K48–K142.

As to expression, first expressed at the end of gastrulation (stage 13) in the anterior ectodermal placode. During intermediate neural plate stages (stages 14-16), expression expands to the presumptive nasal ectoderm (PNE) and the presumptive lens ectoderm (PLE). By stages 18-21, expression begins to deplete in the PNE, while intensifying in the PLE so that by late neural stages (stages 22), expression is restricted to the PLE. Throughout tailbud stages (stage 23-31), expression is maintained in the lens placode and lens vesicle. In the maturing lens (stage 32-onwards), expression is restricted to the anterior lens epithelium, where it remains during the tadpole stage. In tadpoles there is additional expression in the ventral midline of the pharynx. Expression continues in the adult eye.

The protein localises to the nucleus. Functionally, probable transcription factor. Mediates lens formation in the embryo by promoting the proliferation of the specified lens ectoderm and suppressing its terminal differentiation. This Xenopus laevis (African clawed frog) protein is Forkhead box protein E4.